A 118-amino-acid polypeptide reads, in one-letter code: Large ribosomal subunit protein uL18 (118 aa).

It belongs to the universal ribosomal protein uL18 family. In terms of assembly, part of the 50S ribosomal subunit; part of the 5S rRNA/L5/L18/L25 subcomplex. Contacts the 5S and 23S rRNAs.

Functionally, this is one of the proteins that bind and probably mediate the attachment of the 5S RNA into the large ribosomal subunit, where it forms part of the central protuberance. This chain is Large ribosomal subunit protein uL18, found in Helicobacter pylori (strain P12).